The following is a 778-amino-acid chain: Endonuclease MutS2 (778 aa).

329-336 (GPNTGGKT) is an ATP binding site. A Smr domain is found at 703–778 (LDLRGKRYEE…GSGCTIVTFK (76 aa)).

It belongs to the DNA mismatch repair MutS family. MutS2 subfamily. In terms of assembly, homodimer. Binds to stalled ribosomes, contacting rRNA.

Endonuclease that is involved in the suppression of homologous recombination and thus may have a key role in the control of bacterial genetic diversity. Functionally, acts as a ribosome collision sensor, splitting the ribosome into its 2 subunits. Detects stalled/collided 70S ribosomes which it binds and splits by an ATP-hydrolysis driven conformational change. Acts upstream of the ribosome quality control system (RQC), a ribosome-associated complex that mediates the extraction of incompletely synthesized nascent chains from stalled ribosomes and their subsequent degradation. Probably generates substrates for RQC. The protein is Endonuclease MutS2 of Streptococcus suis (strain 98HAH33).